A 352-amino-acid chain; its full sequence is Histidinol-phosphate aminotransferase (352 aa).

An N6-(pyridoxal phosphate)lysine modification is found at lysine 208.

This sequence belongs to the class-II pyridoxal-phosphate-dependent aminotransferase family. Histidinol-phosphate aminotransferase subfamily. Homodimer. The cofactor is pyridoxal 5'-phosphate.

It catalyses the reaction L-histidinol phosphate + 2-oxoglutarate = 3-(imidazol-4-yl)-2-oxopropyl phosphate + L-glutamate. The protein operates within amino-acid biosynthesis; L-histidine biosynthesis; L-histidine from 5-phospho-alpha-D-ribose 1-diphosphate: step 7/9. This Streptococcus sanguinis (strain SK36) protein is Histidinol-phosphate aminotransferase.